A 357-amino-acid polypeptide reads, in one-letter code: Probable leucine aminopeptidase MCYG_04170 (357 aa).

An N-terminal signal peptide occupies residues 1-15; sequence MKVLAALALSALALA. A glycan (N-linked (GlcNAc...) asparagine) is linked at Asn76. His167 and Asp185 together coordinate Zn(2+). Asn186 carries N-linked (GlcNAc...) asparagine glycosylation. Zn(2+)-binding residues include Glu224 and Asp251. Cys291 and Cys295 form a disulfide bridge. His324 is a Zn(2+) binding site.

It belongs to the peptidase M28 family. M28E subfamily. Monomer. Requires Zn(2+) as cofactor.

Its subcellular location is the secreted. Its function is as follows. Probable extracellular aminopeptidase which contributes to pathogenicity. In Arthroderma otae (strain ATCC MYA-4605 / CBS 113480) (Microsporum canis), this protein is Probable leucine aminopeptidase MCYG_04170.